Consider the following 311-residue polypeptide: Cytochrome c biogenesis protein CcsA (311 aa).

Helical transmembrane passes span 11–31 (VLLLGLMAFGALLLALPLAFW), 44–64 (VVQLLVVAANLLLTAQLLWRW), 68–88 (GHFPISNLYESLCFLAWGCTF), 101–121 (LVPAATTPMALVCVAFASFAL), 146–166 (VIMMSYAALLVGSLLSAAVLF), 217–237 (TITVGFLLLTVGIISGAVWAN), 251–268 (TWALICWLVYAAYLHTRL), and 280–300 (VAVSGLFVISVCYIGVNLLGI).

The protein belongs to the CcmF/CycK/Ccl1/NrfE/CcsA family. In terms of assembly, may interact with ccs1.

It localises to the cellular thylakoid membrane. Its function is as follows. Required during biogenesis of c-type cytochromes (cytochrome c6 and cytochrome f) at the step of heme attachment. In Synechococcus sp. (strain RCC307), this protein is Cytochrome c biogenesis protein CcsA.